We begin with the raw amino-acid sequence, 72 residues long: NAD(P)H-quinone oxidoreductase subunit O (72 aa).

The protein belongs to the complex I NdhO subunit family. NDH-1 can be composed of about 15 different subunits; different subcomplexes with different compositions have been identified which probably have different functions.

Its subcellular location is the cellular thylakoid membrane. It carries out the reaction a plastoquinone + NADH + (n+1) H(+)(in) = a plastoquinol + NAD(+) + n H(+)(out). The catalysed reaction is a plastoquinone + NADPH + (n+1) H(+)(in) = a plastoquinol + NADP(+) + n H(+)(out). NDH-1 shuttles electrons from an unknown electron donor, via FMN and iron-sulfur (Fe-S) centers, to quinones in the respiratory and/or the photosynthetic chain. The immediate electron acceptor for the enzyme in this species is believed to be plastoquinone. Couples the redox reaction to proton translocation, and thus conserves the redox energy in a proton gradient. Cyanobacterial NDH-1 also plays a role in inorganic carbon-concentration. The chain is NAD(P)H-quinone oxidoreductase subunit O from Rippkaea orientalis (strain PCC 8801 / RF-1) (Cyanothece sp. (strain PCC 8801)).